Consider the following 114-residue polypeptide: Beta-microseminoprotein E1 (114 aa).

The N-terminal stretch at methionine 1–glycine 20 is a signal peptide. Intrachain disulfides connect cysteine 22-cysteine 70, cysteine 38-cysteine 62, cysteine 57-cysteine 93, cysteine 60-cysteine 69, and cysteine 84-cysteine 107.

The protein belongs to the beta-microseminoprotein family.

The protein resides in the secreted. The protein is Beta-microseminoprotein E1 (MSPE) of Saguinus oedipus (Cotton-top tamarin).